The chain runs to 186 residues: Elongation factor P (186 aa).

The protein belongs to the elongation factor P family.

It is found in the cytoplasm. It functions in the pathway protein biosynthesis; polypeptide chain elongation. Involved in peptide bond synthesis. Stimulates efficient translation and peptide-bond synthesis on native or reconstituted 70S ribosomes in vitro. Probably functions indirectly by altering the affinity of the ribosome for aminoacyl-tRNA, thus increasing their reactivity as acceptors for peptidyl transferase. The polypeptide is Elongation factor P (Shewanella baltica (strain OS223)).